Here is a 252-residue protein sequence, read N- to C-terminus: ATP synthase subunit a (252 aa).

5 consecutive transmembrane segments (helical) span residues 33-53, 92-112, 130-150, 196-216, and 217-237; these read GQVF…AFVA, VPFV…GALV, DINT…YAGL, LVVS…VMVL, and GLFT…TYIG.

Belongs to the ATPase A chain family. As to quaternary structure, F-type ATPases have 2 components, CF(1) - the catalytic core - and CF(0) - the membrane proton channel. CF(1) has five subunits: alpha(3), beta(3), gamma(1), delta(1), epsilon(1). CF(0) has four main subunits: a, b, b' and c.

The protein resides in the cellular thylakoid membrane. Functionally, key component of the proton channel; it plays a direct role in the translocation of protons across the membrane. This is ATP synthase subunit a from Thermosynechococcus vestitus (strain NIES-2133 / IAM M-273 / BP-1).